Reading from the N-terminus, the 503-residue chain is uncharacterized protein (503 aa).

Disordered regions lie at residues 1–26 (MADD…SPTT) and 132–156 (DQQQ…DNSM). Residues 16–26 (AQSSVPTSPTT) are compositionally biased toward low complexity. Residues 147–156 (TPNSVDDNSM) show a composition bias toward polar residues.

This is an uncharacterized protein from Caenorhabditis elegans.